The primary structure comprises 173 residues: NADH-ubiquinone oxidoreductase chain 6 (173 aa).

6 consecutive transmembrane segments (helical) span residues 1–21, 27–47, 48–68, 87–107, 113–133, and 139–159; these read MTYF…AVAS, YGVV…LSLG, VSFV…VVFV, VVGY…VGGF, FGVV…FSGV, and CGVG…FVVL.

This sequence belongs to the complex I subunit 6 family.

The protein resides in the mitochondrion membrane. The enzyme catalyses a ubiquinone + NADH + 5 H(+)(in) = a ubiquinol + NAD(+) + 4 H(+)(out). Its function is as follows. Core subunit of the mitochondrial membrane respiratory chain NADH dehydrogenase (Complex I) that is believed to belong to the minimal assembly required for catalysis. Complex I functions in the transfer of electrons from NADH to the respiratory chain. The immediate electron acceptor for the enzyme is believed to be ubiquinone. The chain is NADH-ubiquinone oxidoreductase chain 6 (MT-ND6) from Cepphus grylle (Black guillemot).